Consider the following 267-residue polypeptide: 4-hydroxy-tetrahydrodipicolinate reductase (267 aa).

Residue 8 to 13 (GASGRM) participates in NAD(+) binding. Position 35 (arginine 35) interacts with NADP(+). NAD(+) contacts are provided by residues 98–100 (GTT) and 122–125 (APNM). Catalysis depends on histidine 155, which acts as the Proton donor/acceptor. Position 156 (histidine 156) interacts with (S)-2,3,4,5-tetrahydrodipicolinate. The active-site Proton donor is lysine 159. 165-166 (GT) provides a ligand contact to (S)-2,3,4,5-tetrahydrodipicolinate.

The protein belongs to the DapB family.

The protein localises to the cytoplasm. It carries out the reaction (S)-2,3,4,5-tetrahydrodipicolinate + NAD(+) + H2O = (2S,4S)-4-hydroxy-2,3,4,5-tetrahydrodipicolinate + NADH + H(+). The catalysed reaction is (S)-2,3,4,5-tetrahydrodipicolinate + NADP(+) + H2O = (2S,4S)-4-hydroxy-2,3,4,5-tetrahydrodipicolinate + NADPH + H(+). It functions in the pathway amino-acid biosynthesis; L-lysine biosynthesis via DAP pathway; (S)-tetrahydrodipicolinate from L-aspartate: step 4/4. Catalyzes the conversion of 4-hydroxy-tetrahydrodipicolinate (HTPA) to tetrahydrodipicolinate. This Hahella chejuensis (strain KCTC 2396) protein is 4-hydroxy-tetrahydrodipicolinate reductase.